The following is a 333-amino-acid chain: Dioxygenase cnsJ (333 aa).

Residues His153, Asp155, and His235 each coordinate Fe cation. The segment at 309-333 (NAQPEGEDDGGMKPNEGEHVVEAQI) is disordered. Over residues 323-333 (NEGEHVVEAQI) the composition is skewed to basic and acidic residues.

It belongs to the PhyH family. Homodimer. Fe cation is required as a cofactor.

Its pathway is alkaloid biosynthesis. In terms of biological role, dioxygenase; part of the gene cluster that mediates the biosynthesis of communesins, a prominent class of indole alkaloids with great potential as pharmaceuticals. Communesins are biosynthesized by the coupling of tryptamine and aurantioclavine, two building blocks derived from L-tryptophan. The L-tryptophan decarboxylase cnsB converts L-tryptophan to tryptamine, whereas the tryptophan dimethylallyltransferase cnsF converts L-tryptophan to 4-dimethylallyl tryptophan which is further transformed to aurantioclavine by the aurantioclavine synthase cnsA, probably aided by the catalase cnsD. The cytochrome P450 monooxygenase cnsC catalyzes the heterodimeric coupling between the two different indole moieties, tryptamine and aurantioclavine, to construct vicinal quaternary stereocenters and yield the heptacyclic communesin scaffold. The O-methyltransferase cnsE then methylates the communesin scaffold to produce communesin K, the simplest characterized communesin that contains the heptacyclic core. The dioxygenase cnsJ converts communesin K into communesin I. Acylation to introduce the hexadienyl group at position N16 of communesin I by the acyltransferase cnsK leads to the production of communesin B. The hexadienyl group is produced by the highly reducing polyketide synthase cnsI, before being hydrolytically removed from cnsI by the serine hydrolase cnsH, converted into hexadienyl-CoA by the CoA ligase cnsG, and then transferred to communesin I by cnsK. Surprisingly, cnsK may also be a promiscuous acyltransferase that can tolerate a range of acyl groups, including acetyl-, propionyl-, and butyryl-CoA, which lead to communesins A, G and H respectively. The roles of the alpha-ketoglutarate-dependent dioxygenases cnsM and cnsP have still to be determined. The polypeptide is Dioxygenase cnsJ (Penicillium expansum (Blue mold rot fungus)).